The primary structure comprises 163 residues: Phosphopantetheine adenylyltransferase (163 aa).

Thr-11 contributes to the substrate binding site. Residues 11-12 and His-19 each bind ATP; that span reads TF. The substrate site is built by Lys-43, Leu-75, and Arg-89. Residues 90-92, Glu-100, and 125-131 contribute to the ATP site; these read GLR and YMFISAT.

It belongs to the bacterial CoaD family. Homohexamer. It depends on Mg(2+) as a cofactor.

The protein resides in the cytoplasm. The enzyme catalyses (R)-4'-phosphopantetheine + ATP + H(+) = 3'-dephospho-CoA + diphosphate. It participates in cofactor biosynthesis; coenzyme A biosynthesis; CoA from (R)-pantothenate: step 4/5. In terms of biological role, reversibly transfers an adenylyl group from ATP to 4'-phosphopantetheine, yielding dephospho-CoA (dPCoA) and pyrophosphate. This is Phosphopantetheine adenylyltransferase from Aromatoleum aromaticum (strain DSM 19018 / LMG 30748 / EbN1) (Azoarcus sp. (strain EbN1)).